The sequence spans 365 residues: 2-aminoethylphosphonate--pyruvate transaminase (365 aa).

Lysine 194 carries the post-translational modification N6-(pyridoxal phosphate)lysine.

The protein belongs to the class-V pyridoxal-phosphate-dependent aminotransferase family. PhnW subfamily. In terms of assembly, homodimer. Pyridoxal 5'-phosphate serves as cofactor.

The catalysed reaction is (2-aminoethyl)phosphonate + pyruvate = phosphonoacetaldehyde + L-alanine. Involved in phosphonate degradation. The chain is 2-aminoethylphosphonate--pyruvate transaminase from Bacillus mycoides (strain KBAB4) (Bacillus weihenstephanensis).